Consider the following 801-residue polypeptide: Phosphatidylinositol 4-kinase beta (801 aa).

Disordered stretches follow at residues 1–29 (MGDT…GGSL), 101–121 (EDEM…RRRQ), and 250–304 (RKRE…EDEP). An N-acetylglycine modification is found at glycine 2. Residues 2–68 (GDTAVEPAPL…VRLLHGAVAV (67 aa)) are interaction with ACBD3. One can recognise a PIK helical domain in the interval 29–242 (LLSVITEGVG…GTKLRKLILS (214 aa)). Position 258 is a phosphoserine (serine 258). Over residues 259–268 (PALNTGLSPS) the composition is skewed to polar residues. Threonine 263 bears the Phosphothreonine mark. A phosphoserine mark is found at serine 266, serine 275, serine 277, serine 284, serine 294, and serine 413. Residues 278–294 (DATASISLSSSLKRTAS) are compositionally biased toward low complexity. Threonine 423 is modified (phosphothreonine). Residue serine 496 is modified to Phosphoserine. Phosphothreonine occurs at positions 502 and 504. The region spanning 520 to 786 (EPWQEKVRRI…MVDGSMRSIT (267 aa)) is the PI3K/PI4K catalytic domain. Positions 526–532 (VRRIREG) are G-loop. The segment at 653–661 (QVKDRHNGN) is catalytic loop. Positions 672 to 696 (HIDFGFILSSSPRNLGFETSAFKLT) are activation loop.

This sequence belongs to the PI3/PI4-kinase family. Type III PI4K subfamily. Interacts with ARF1 and ARF3 in the Golgi complex, but not with ARF4, ARF5 or ARF6. Interacts with NCS1/FREQ in a calcium-independent manner. Interacts with CALN1/CABP8 and CALN2/CABP7; in a calcium-dependent manner; this interaction competes with NCS1/FREQ binding. Interacts with ACBD3. Interacts with ARMH3, YWHAB, YWHAE, YWHAG, YWHAH, YWHAQ, YWHAZ and SFN. Interacts with GGA2 (via VHS domain); the interaction is important for PI4KB location at the Golgi apparatus membrane. Interacts with ATG9A. Requires Mg(2+) as cofactor. The cofactor is Mn(2+).

Its subcellular location is the endomembrane system. It is found in the mitochondrion outer membrane. The protein resides in the rough endoplasmic reticulum membrane. The protein localises to the golgi apparatus. It localises to the golgi apparatus membrane. It carries out the reaction a 1,2-diacyl-sn-glycero-3-phospho-(1D-myo-inositol) + ATP = a 1,2-diacyl-sn-glycero-3-phospho-(1D-myo-inositol 4-phosphate) + ADP + H(+). Its activity is regulated as follows. Inhibited by wortmannin. Increased kinase activity upon interaction with NCS1/FREQ. Phosphorylates phosphatidylinositol (PI) in the first committed step in the production of the second messenger inositol-1,4,5,-trisphosphate (PIP). May regulate Golgi disintegration/reorganization during mitosis, possibly via its phosphorylation. Involved in Golgi-to-plasma membrane trafficking. May play an important role in the inner ear development. The polypeptide is Phosphatidylinositol 4-kinase beta (PI4KB) (Sorex araneus (Eurasian common shrew)).